Consider the following 294-residue polypeptide: Tetraspanin-15 (294 aa).

Over 1–23 (MPRGDSEQVRYCARFSYLWLKFS) the chain is Cytoplasmic. A helical membrane pass occupies residues 24 to 44 (LIIYSTVFWLIGALVLSVGIY). Over 45-62 (AEVERQKYKTLESAFLAP) the chain is Extracellular. The chain crosses the membrane as a helical span at residues 63-83 (AIILILLGVVMFMVSFIGVLA). The Cytoplasmic segment spans residues 84 to 93 (SLRDNLYLLQ). Residues 94–114 (AFMYILGICLIMELIGGVVAL) form a helical membrane-spanning segment. The Extracellular segment spans residues 115-235 (TFRNQTIDFL…WFMDNYTIMA (121 aa)). Asn118 carries N-linked (GlcNAc...) asparagine glycosylation. 4 disulfide bridges follow: Cys154–Cys219, Cys155–Cys185, Cys171–Cys179, and Cys186–Cys198. N-linked (GlcNAc...) asparagine glycans are attached at residues Asn189 and Asn230. A helical membrane pass occupies residues 236–256 (GILLGILLPQFLGVLLTLLYI). Residues 257 to 294 (TRVEDIIMEHSVTDGLLGPGAKPSVEAAGTGCCLCYPN) lie on the Cytoplasmic side of the membrane.

The protein belongs to the tetraspanin (TM4SF) family. As to quaternary structure, interacts with ADAM10; the interaction influences ADAM10 substrate specificity, endocytosis and turnover. Post-translationally, palmitoylated.

The protein localises to the cell membrane. Its subcellular location is the late endosome membrane. Functionally, part of TspanC8 subgroup, composed of 6 members that interact with the transmembrane metalloprotease ADAM10. This interaction is required for ADAM10 exit from the endoplasmic reticulum and for enzymatic maturation and trafficking to the cell surface as well as substrate specificity. Different TspanC8/ADAM10 complexes have distinct substrates. Promotes ADAM10-mediated cleavage of CDH2. Negatively regulates ligand-induced Notch activity probably by regulating ADAM10 activity. The chain is Tetraspanin-15 from Homo sapiens (Human).